Consider the following 691-residue polypeptide: MALDRRGFLKFIGGATAGILATPVVWKGLDDVSIWSQNWSWIPRNIKGANSYVPTVSKLCPTGIGVRVRLVDGRPVRVIGNPEHPLSKGGVSSIAAAEVQMLYSPARMKRPLKRSPDGAYVMISWEEAEAMLLDGLKAAKGGDALACISGDDNGTINELLSAFVQQSGSKSFFLMPGEAQPAAKAWDLMGGEGQIGYDIEKSDFVLAIGANVLEAWGTAIRNRHAFGASHPHGAEPTAQFVYAGPVLNNTATGADDWLPIRPGTESAFALGLAHLLIKAGASSSAPDFDAFRSLAASFSPEKVAAQTGVDAKALTALAQALAKAKHPLVIVGSEFSQGAGAAPVMAGIALNMLLGSVNRDGGLRALPVARKVVPAGMDRKAMLQQDLTLWASAIASGKAKAPKAMLVYEANPVYALPQGSAFKDTLAKVPFKVAFTSFLDETAMQCDLVIPVSMGLERLDDVCTPYGCGEVVYSLATPVTAPLFDTKPAGDALIALGGKLGLDLGVASFEDMLKAKAAAHGADFDKLAEGTAFTSRATVGANLSFRPDVLSKALDVKAPALPLALAPVMKLNMGTSKTAIPPFNTKTIRRWEVQGKEGYVMLNGATARKLGLAQHDRVVLSNPTGKVTVRVNIFEGVMNDTVAMPLGFGHTAFDEFSKGKGENVMHLLAPSTEPVTGLAVWTGAGVNIAKA.

The tat-type signal signal peptide spans 1–27 (MALDRRGFLKFIGGATAGILATPVVWK). In terms of domain architecture, 4Fe-4S Mo/W bis-MGD-type spans 50-106 (NSYVPTVSKLCPTGIGVRVRLVDGRPVRVIGNPEHPLSKGGVSSIAAAEVQMLYSPA).

The protein belongs to the prokaryotic molybdopterin-containing oxidoreductase family. The Qrc complex is composed of four subunits: QrcA, QrcB, QrcC and QrcD. Can form a supercomplex with the [NiFe] hydrogenase HynA1 and the tetraheme Type I cytochrome c3 TpIc(3), its physiological electron donors. It depends on There is no molybdenum or tungsten pterin cofactor present in the Qrc complex, despite the similarity of QrcB to molybdopterin-containing oxidoreductases. as a cofactor. Predicted to be exported by the Tat system. The position of the signal peptide cleavage has not been experimentally proven.

It localises to the periplasm. In terms of biological role, component of the respiratory Qrc complex, that catalyzes the reduction of the menaquinone pool using electrons transferred from the reduced periplasmic cytochrome c3, and which is probably involved in sulfate respiration. Is likely essential for growth on H(2) or formate since the periplasmic hydrogenases and/or formate dehydrogenases act as primary electron donors for the Qrc complex. The function of the QrcB subunit is unknown; in the absence of a catalytic site, it may provide a structural scaffold for the other subunits. This chain is Menaquinone reductase, molybdopterin-binding-like subunit, found in Nitratidesulfovibrio vulgaris (strain ATCC 29579 / DSM 644 / CCUG 34227 / NCIMB 8303 / VKM B-1760 / Hildenborough) (Desulfovibrio vulgaris).